Reading from the N-terminus, the 556-residue chain is Zinc finger protein 18 (556 aa).

The region spanning 41–123 (RQLFRQFRYQ…TLVESLKGDP (83 aa)) is the SCAN box domain. The tract at residues 169–195 (QDLPLQNTSSAPGELLSHGVKEESDLE) is disordered. The KRAB domain maps to 218–291 (EVGTALLPSL…HLHSAEKMAR (74 aa)). 5 C2H2-type zinc fingers span residues 415 to 437 (PTCR…QRTH), 443 to 465 (FHCR…QRTH), 471 to 493 (CKCD…EKIH), 499 to 521 (YKCP…QRVH), and 527 to 549 (YKCT…QRSH).

It belongs to the krueppel C2H2-type zinc-finger protein family.

The protein localises to the nucleus. Its function is as follows. May be involved in transcriptional regulation. The protein is Zinc finger protein 18 (Znf18) of Rattus norvegicus (Rat).